We begin with the raw amino-acid sequence, 311 residues long: Retron Ec78 reverse transcriptase (311 aa).

The Reverse transcriptase domain maps to 15-241 (DSGISAFLVT…HNRHVTGVTI (227 aa)). The Mg(2+) site is built by Asp96, Asp187, and Asp188.

This sequence belongs to the bacterial reverse transcriptase family.

It catalyses the reaction DNA(n) + a 2'-deoxyribonucleoside 5'-triphosphate = DNA(n+1) + diphosphate. In terms of biological role, reverse transcriptase (RT) component of antiviral defense system retron Ec78, composed of a non-coding RNA (ncRNA), this reverse transcriptase (RT), a probable ATPase and a putative HNH endonuclease. Expression of retron Ec78 confers protection against bacteriophage T5. At multiplicity of infection (MOI) of 0.02 cultures slow growth when infected with T5 but do not collapse, at MOI 2 cultures enter growth stasis. Responsible for synthesis of msDNA-Ec78 (a linear ssDNA with a 5'-terminal phosphate residue). Unlike most known msDNAs the mature product does not have an RNA component. The retron transcript serves as primer and template for the reaction, and codes for the RT. Not mutagenic when cloned in E.coli. It is thought to be synthesized as a branched RNA with a 2',5'-phosphodiester linkage to ssDNA; the linkage is cleaved endonucleolytically by ExoVII (xseA-xseB) leaving the observed mature 5'-ssDNA terminus. Overexpression of the ncRNA and RT, which leads to increased levels of msDNA, is not mutagenic in vivo. As the stem in the msDNA does not have a mismatch it probably does not bind or sequester MutS and/or MutL. This chain is Retron Ec78 reverse transcriptase, found in Escherichia coli.